The following is a 350-amino-acid chain: Putative transport protein YdbI (350 aa).

Helical transmembrane passes span 18 to 38 (IFVVLTGVLYLFKSMINLILL), 67 to 87 (VVITFLYMLLAVLLTVGGFVF), 145 to 165 (ISTFGLQVVMALILSMFFLFE), 207 to 227 (FIIALVNCILTFIALWIMHFP), 229 to 249 (LFGLSIMVFFLGLIPVAGVVI), 257 to 277 (IAYSTGGGMYVLYIVLVIFAI), 289 to 309 (LMSAKTELPIFFTFTVLIFSE), and 311 to 331 (FFGIWGLIIGIPIFVFLLDIL).

Belongs to the autoinducer-2 exporter (AI-2E) (TC 2.A.86) family.

It is found in the cell membrane. In Bacillus subtilis (strain 168), this protein is Putative transport protein YdbI (ydbI).